A 183-amino-acid polypeptide reads, in one-letter code: Microfibrillar-associated protein 2 (183 aa).

Residues Met-1–Ala-17 constitute a signal peptide (or 19). Gln-18 carries the post-translational modification Pyrrolidone carboxylic acid. 3 positions are modified to sulfotyrosine: Tyr-47, Tyr-48, and Tyr-50. Residues Ser-58 to Pro-94 are disordered. Residues Glu-60 to Val-74 are compositionally biased toward low complexity. The ShKT domain maps to Cys-153–Cys-183. 3 cysteine pairs are disulfide-bonded: Cys-153–Cys-183, Cys-160–Cys-176, and Cys-169–Cys-180.

The protein belongs to the MFAP family. As to quaternary structure, forms a ternary complex with BGN and ELN. Interacts with FBN1 (via N-terminal domain) and FBN2. Post-translationally, forms intermolecular disulfide bonds either with other MAGP-1 molecules or with other components of the microfibrils. May form transglutaminase cross-links. O-glycosylated.

It localises to the secreted. Its subcellular location is the extracellular space. It is found in the extracellular matrix. Component of the elastin-associated microfibrils. The chain is Microfibrillar-associated protein 2 (MFAP2) from Homo sapiens (Human).